We begin with the raw amino-acid sequence, 258 residues long: MLKVRVIPCLDVKDGRVVKGVQFVDLRDAGDPVESARAYDAAGADELTFLDITASHENRGTILDVVRRTAEQCFMPLTVGGGVRTVEDVRALLQAGADKVSINTAAVHRRAFVGEAAEKFGEQCIVVAIDAKQVSGPGETPRWEIFTHGGRKPTGLDVVEYAREVVDLGAGEILLTSMDRDGTGKGFDTALTRAVADAVQVPVIASGGVGTLDHMVDGIREGGATAVLAASIFHFGTFTVRQAKERLAAAGLPVRMDT.

Active-site residues include Asp-11 and Asp-130.

The protein belongs to the HisA/HisF family. In terms of assembly, heterodimer of HisH and HisF.

The protein localises to the cytoplasm. It carries out the reaction 5-[(5-phospho-1-deoxy-D-ribulos-1-ylimino)methylamino]-1-(5-phospho-beta-D-ribosyl)imidazole-4-carboxamide + L-glutamine = D-erythro-1-(imidazol-4-yl)glycerol 3-phosphate + 5-amino-1-(5-phospho-beta-D-ribosyl)imidazole-4-carboxamide + L-glutamate + H(+). The protein operates within amino-acid biosynthesis; L-histidine biosynthesis; L-histidine from 5-phospho-alpha-D-ribose 1-diphosphate: step 5/9. Its function is as follows. IGPS catalyzes the conversion of PRFAR and glutamine to IGP, AICAR and glutamate. The HisF subunit catalyzes the cyclization activity that produces IGP and AICAR from PRFAR using the ammonia provided by the HisH subunit. The protein is Imidazole glycerol phosphate synthase subunit HisF of Azorhizobium caulinodans (strain ATCC 43989 / DSM 5975 / JCM 20966 / LMG 6465 / NBRC 14845 / NCIMB 13405 / ORS 571).